Consider the following 390-residue polypeptide: Acetylornithine aminotransferase (390 aa).

Pyridoxal 5'-phosphate contacts are provided by residues 105-106 and Phe-132; that span reads GA. N(2)-acetyl-L-ornithine is bound at residue Arg-135. 217–220 is a pyridoxal 5'-phosphate binding site; the sequence is DEVQ. Lys-246 bears the N6-(pyridoxal phosphate)lysine mark. N(2)-acetyl-L-ornithine is bound at residue Ser-274. Residue Thr-275 coordinates pyridoxal 5'-phosphate.

Belongs to the class-III pyridoxal-phosphate-dependent aminotransferase family. ArgD subfamily. As to quaternary structure, homodimer. It depends on pyridoxal 5'-phosphate as a cofactor.

Its subcellular location is the cytoplasm. The enzyme catalyses N(2)-acetyl-L-ornithine + 2-oxoglutarate = N-acetyl-L-glutamate 5-semialdehyde + L-glutamate. The protein operates within amino-acid biosynthesis; L-arginine biosynthesis; N(2)-acetyl-L-ornithine from L-glutamate: step 4/4. The protein is Acetylornithine aminotransferase of Methanothermobacter thermautotrophicus (strain ATCC 29096 / DSM 1053 / JCM 10044 / NBRC 100330 / Delta H) (Methanobacterium thermoautotrophicum).